Here is a 219-residue protein sequence, read N- to C-terminus: ATP synthase delta chain, chloroplastic (219 aa).

The transit peptide at 1–33 directs the protein to the chloroplast; that stretch reads MLAAKSIAGPRAFKASAVRAAPKAGRRTVVVMA.

It belongs to the ATPase delta chain family. F-type ATPases have 2 components, F(1) - the catalytic core - and F(0) - the membrane proton channel. F(1) has five subunits: alpha(3), beta(3), gamma(1), delta(1), epsilon(1). F(0) has four main subunits: a(1), b(1), b'(1) and c(10-14). The alpha and beta chains form an alternating ring which encloses part of the gamma chain. F(1) is attached to F(0) by a central stalk formed by the gamma and epsilon chains, while a peripheral stalk is formed by the delta, b and b' chains.

The protein resides in the plastid. It is found in the chloroplast thylakoid membrane. F(1)F(0) ATP synthase produces ATP from ADP in the presence of a proton or sodium gradient. F-type ATPases consist of two structural domains, F(1) containing the extramembraneous catalytic core and F(0) containing the membrane proton channel, linked together by a central stalk and a peripheral stalk. During catalysis, ATP synthesis in the catalytic domain of F(1) is coupled via a rotary mechanism of the central stalk subunits to proton translocation. Its function is as follows. This protein seems to be part of the stalk that links CF(0) to CF(1). It either transmits conformational changes from CF(0) into CF(1) or is implicated in proton conduction. This is ATP synthase delta chain, chloroplastic from Chlamydomonas reinhardtii (Chlamydomonas smithii).